Here is a 274-residue protein sequence, read N- to C-terminus: MCILKISRIWNKILYDVSFLLKKEPILSDFYQSSILQHQSFTSSLSYILSNKLSTSMISEKKIQGIFDDVYLNDRSILNFIVQDIKAVLKRDPAVNDYLTPLLYLKGFHALEAYRISHYLWNTGKKSLSLYLQSRISSEFSVDIHPAAFIGSGVMLDHATGIVIGEGVTIENDVSILHSVTLGGTGKNFSQNRHPTIRKGVVIGAGAKILGNIEVGSGAKIGAGSIVLKNVPSDVTVVGVPAKIVSQVSSKKYYSQKKKNSLKYINIFQHGDGI.

It belongs to the transferase hexapeptide repeat family.

The protein localises to the cytoplasm. It catalyses the reaction L-serine + acetyl-CoA = O-acetyl-L-serine + CoA. The protein operates within amino-acid biosynthesis; L-cysteine biosynthesis; L-cysteine from L-serine: step 1/2. The sequence is that of Serine acetyltransferase (cysE) from Buchnera aphidicola subsp. Acyrthosiphon pisum (strain APS) (Acyrthosiphon pisum symbiotic bacterium).